Here is a 396-residue protein sequence, read N- to C-terminus: Actin-related protein 6 (396 aa).

It belongs to the actin family. ARP6 subfamily. In terms of assembly, interacts with CBX1 and CBX3.

The protein resides in the cytoplasm. The protein localises to the cytoskeleton. It is found in the nucleus. It localises to the nucleolus. Required for formation and/or maintenance of the proper nucleolar structure and function. Plays a dual role in the regulation of ribosomal DNA (rDNA) transcription. In the presence of high glucose, it maintains active rDNA transcription through H2A.Z deposition and under glucose starvation, is required for the repression of rDNA transcription, and this function may be independent of H2A.Z. The chain is Actin-related protein 6 (ACTR6) from Gallus gallus (Chicken).